The primary structure comprises 300 residues: Protoheme IX farnesyltransferase (300 aa).

8 consecutive transmembrane segments (helical) span residues 24–44 (VTQL…PGMV), 46–66 (WHVL…AFAI), 94–114 (PQIL…LYTF), 118–138 (LTMW…TLLL), 146–166 (IVIG…AVTG), 172–192 (AWIL…VLAL), 224–244 (VILF…VVYL), and 278–298 (IVYL…RPLL).

It belongs to the UbiA prenyltransferase family. Protoheme IX farnesyltransferase subfamily.

It is found in the cell inner membrane. The catalysed reaction is heme b + (2E,6E)-farnesyl diphosphate + H2O = Fe(II)-heme o + diphosphate. It functions in the pathway porphyrin-containing compound metabolism; heme O biosynthesis; heme O from protoheme: step 1/1. Converts heme B (protoheme IX) to heme O by substitution of the vinyl group on carbon 2 of heme B porphyrin ring with a hydroxyethyl farnesyl side group. This chain is Protoheme IX farnesyltransferase, found in Burkholderia ambifaria (strain ATCC BAA-244 / DSM 16087 / CCUG 44356 / LMG 19182 / AMMD) (Burkholderia cepacia (strain AMMD)).